The sequence spans 296 residues: Bifunctional protein FolD (296 aa).

NADP(+) contacts are provided by residues 169-171, Thr-196, and Val-237; that span reads GRG.

Belongs to the tetrahydrofolate dehydrogenase/cyclohydrolase family. In terms of assembly, homodimer.

It carries out the reaction (6R)-5,10-methylene-5,6,7,8-tetrahydrofolate + NADP(+) = (6R)-5,10-methenyltetrahydrofolate + NADPH. The catalysed reaction is (6R)-5,10-methenyltetrahydrofolate + H2O = (6R)-10-formyltetrahydrofolate + H(+). Its pathway is one-carbon metabolism; tetrahydrofolate interconversion. Catalyzes the oxidation of 5,10-methylenetetrahydrofolate to 5,10-methenyltetrahydrofolate and then the hydrolysis of 5,10-methenyltetrahydrofolate to 10-formyltetrahydrofolate. The polypeptide is Bifunctional protein FolD (Kocuria rhizophila (strain ATCC 9341 / DSM 348 / NBRC 103217 / DC2201)).